Consider the following 233-residue polypeptide: ATP synthase subunit C lysine N-methyltransferase (233 aa).

The residue at position 1 (M1) is an N-acetylmethionine. A helical membrane pass occupies residues 38-58 (FLLTGLVGGTLVAVYAVATPF). The segment at 56–90 (TPFVTPALRKVCLPFVPATTKQIENVVKMLRCRRG) is required for mitochondrial location.

It belongs to the ANT/ATPSC lysine N-methyltransferase family. In terms of tissue distribution, ubiquitously expressed.

Its subcellular location is the mitochondrion membrane. It catalyses the reaction L-lysyl-[protein] + 3 S-adenosyl-L-methionine = N(6),N(6),N(6)-trimethyl-L-lysyl-[protein] + 3 S-adenosyl-L-homocysteine + 3 H(+). Mitochondrial protein-lysine N-methyltransferase that trimethylates ATP synthase subunit C, ATP5MC1 and ATP5MC2. Trimethylation is required for proper incorporation of the C subunit into the ATP synthase complex and mitochondrial respiration. Promotes chronic pain. Involved in persistent inflammatory and neuropathic pain: methyltransferase activity in the mitochondria of sensory neurons promotes chronic pain via a pathway that depends on the production of reactive oxygen species (ROS) and on the engagement of spinal cord microglia. This is ATP synthase subunit C lysine N-methyltransferase from Homo sapiens (Human).